The sequence spans 469 residues: 3-isopropylmalate dehydratase large subunit (469 aa).

The [4Fe-4S] cluster site is built by Cys347, Cys410, and Cys413.

It belongs to the aconitase/IPM isomerase family. LeuC type 1 subfamily. Heterodimer of LeuC and LeuD. [4Fe-4S] cluster is required as a cofactor.

It carries out the reaction (2R,3S)-3-isopropylmalate = (2S)-2-isopropylmalate. The protein operates within amino-acid biosynthesis; L-leucine biosynthesis; L-leucine from 3-methyl-2-oxobutanoate: step 2/4. Functionally, catalyzes the isomerization between 2-isopropylmalate and 3-isopropylmalate, via the formation of 2-isopropylmaleate. The sequence is that of 3-isopropylmalate dehydratase large subunit from Burkholderia pseudomallei (strain 1106a).